Consider the following 258-residue polypeptide: Ferredoxin--NADP reductase (258 aa).

An FAD-binding FR-type domain is found at 2 to 102 (SNLYTERVLS…RKPTGTLVHD (101 aa)). FAD contacts are provided by Arg-51, Ala-52, Tyr-53, Ser-54, Phe-67, Ile-69, Leu-76, Thr-77, and Thr-117. Val-144, Arg-145, Thr-181, Arg-182, Arg-190, Ser-223, Glu-227, Phe-255, and Glu-257 together coordinate NADP(+). Residues Phe-255, Glu-257, and Lys-258 each coordinate FAD.

This sequence belongs to the ferredoxin--NADP reductase type 1 family. Monomer. It depends on FAD as a cofactor.

It catalyses the reaction 2 reduced [2Fe-2S]-[ferredoxin] + NADP(+) + H(+) = 2 oxidized [2Fe-2S]-[ferredoxin] + NADPH. In terms of biological role, transports electrons between ferredoxin and NADPH. Provides electrons to heme oxygenase (pigA) allowing anaerobic heme degradation. Provides electrons necessary to reduce and mobilize Fe(3+) in a heterooligomeric bacterioferritin (BFR) complex to Fe(2+). Reduction of Fe(3+) in a pure FtnA BFR does not require Bfd. Reduction of Fe(3+) in a pure BfrB BFR does require Bfd. The polypeptide is Ferredoxin--NADP reductase (Pseudomonas aeruginosa (strain ATCC 15692 / DSM 22644 / CIP 104116 / JCM 14847 / LMG 12228 / 1C / PRS 101 / PAO1)).